The following is a 281-amino-acid chain: Acetylglutamate kinase (281 aa).

Substrate-binding positions include Gly-64 to Gly-65, Arg-86, and Asn-179.

The protein belongs to the acetylglutamate kinase family. ArgB subfamily.

It is found in the cytoplasm. The catalysed reaction is N-acetyl-L-glutamate + ATP = N-acetyl-L-glutamyl 5-phosphate + ADP. Its pathway is amino-acid biosynthesis; L-arginine biosynthesis; N(2)-acetyl-L-ornithine from L-glutamate: step 2/4. Catalyzes the ATP-dependent phosphorylation of N-acetyl-L-glutamate. This Campylobacter curvus (strain 525.92) protein is Acetylglutamate kinase.